Reading from the N-terminus, the 71-residue chain is Protein SlyX homolog (71 aa).

The protein belongs to the SlyX family.

This chain is Protein SlyX homolog, found in Rhodopseudomonas palustris (strain HaA2).